The sequence spans 1105 residues: Integrator complex subunit 2 (1105 aa).

The helical transmembrane segment at 822–842 (FVFCSPYLLMILLRILKGSLA) threads the bilayer.

It belongs to the Integrator subunit 2 family. In terms of assembly, belongs to the multiprotein complex Integrator, at least composed of IntS1, IntS2, IntS3, IntS4, omd/IntS5, IntS6, defl/IntS7, IntS8, IntS9, IntS10, IntS11, IntS12, asun/IntS13, IntS14 and IntS15. The core complex associates with protein phosphatase 2A subunits mts/PP2A and Pp2A-29B, to form the Integrator-PP2A (INTAC) complex.

Its subcellular location is the nucleus membrane. It is found in the nucleus. Component of the integrator complex, a multiprotein complex that terminates RNA polymerase II (Pol II) transcription in the promoter-proximal region of genes. The integrator complex provides a quality checkpoint during transcription elongation by driving premature transcription termination of transcripts that are unfavorably configured for transcriptional elongation: the complex terminates transcription by (1) catalyzing dephosphorylation of the C-terminal domain (CTD) of Pol II subunit Polr2A/Rbp1 and Spt5, and (2) degrading the exiting nascent RNA transcript via endonuclease activity. The integrator complex is also involved in the 3'-end processing of the U7 snRNA, and also the spliceosomal snRNAs U1, U2, U4 and U5. This is Integrator complex subunit 2 from Drosophila melanogaster (Fruit fly).